A 141-amino-acid polypeptide reads, in one-letter code: MPDAVGRELPRDGTVLAFDYGEKKIGVALGNFITREARALTILPNITVEGRFEAVAALIQAWNPVQLIVGMPVNPEGGEQPSMKLARRFGNQLNGRFGLPVEWVDERYTSRAASMAGARRGELDAEAARIILQQYFDQFPL.

Belongs to the YqgF nuclease family.

The protein localises to the cytoplasm. Its function is as follows. Could be a nuclease involved in processing of the 5'-end of pre-16S rRNA. In Cupriavidus taiwanensis (strain DSM 17343 / BCRC 17206 / CCUG 44338 / CIP 107171 / LMG 19424 / R1) (Ralstonia taiwanensis (strain LMG 19424)), this protein is Putative pre-16S rRNA nuclease.